Consider the following 88-residue polypeptide: Small ribosomal subunit protein bS20 (88 aa).

The interval 1 to 27 (MANSKSAKKRALQSEKRRQHNASRRSM) is disordered.

The protein belongs to the bacterial ribosomal protein bS20 family.

Binds directly to 16S ribosomal RNA. This is Small ribosomal subunit protein bS20 from Shewanella sediminis (strain HAW-EB3).